The sequence spans 207 residues: MPSLLISVLFLHIAIYIINTIGASTIDSLLWLIYTKLPTSASCMAREQHQMKLEVVQLKREMNATSSQDEFAKWAKLRRRHDKALEEYEVKNKQFSRFKSLFDVAVKALRWAGTSGLILLLQFWFSKTPIFTLPPSWIPWQVEWVLSFPRAPMGTVSIQVWGGACAVMVALVGEAIGATVRYLYGSKDSMEAIKVGAGAVEKEKKRQ.

Over 1–4 (MPSL) the chain is Lumenal. A helical membrane pass occupies residues 5–24 (LISVLFLHIAIYIINTIGAS). The Cytoplasmic segment spans residues 25–110 (TIDSLLWLIY…LFDVAVKALR (86 aa)). A coiled-coil region spans residues 44–97 (MAREQHQMKLEVVQLKREMNATSSQDEFAKWAKLRRRHDKALEEYEVKNKQFSR). The helical transmembrane segment at 111–131 (WAGTSGLILLLQFWFSKTPIF) threads the bilayer. Residues 132-155 (TLPPSWIPWQVEWVLSFPRAPMGT) are Lumenal-facing. The chain crosses the membrane as a helical span at residues 156–172 (VSIQVWGGACAVMVALV). At 173-207 (GEAIGATVRYLYGSKDSMEAIKVGAGAVEKEKKRQ) the chain is on the cytoplasmic side.

Belongs to the WRB/GET1 family. In terms of assembly, interacts with GET3.

Its subcellular location is the endoplasmic reticulum membrane. Required for the post-translational delivery of tail-anchored (TA) proteins to the endoplasmic reticulum. Acts as a membrane receptor for soluble GET3, which recognizes and selectively binds the transmembrane domain of TA proteins in the cytosol. The polypeptide is Protein GET1 (Paracoccidioides lutzii (strain ATCC MYA-826 / Pb01) (Paracoccidioides brasiliensis)).